Consider the following 239-residue polypeptide: Ribonuclease HII (239 aa).

The 214-residue stretch at 18–231 (KIIVGLDEAG…SKNLLKEIEE (214 aa)) folds into the RNase H type-2 domain. Residues Asp24, Glu25, and Asp125 each contribute to the a divalent metal cation site.

Belongs to the RNase HII family. Requires Mn(2+) as cofactor. Mg(2+) is required as a cofactor.

The protein resides in the cytoplasm. It catalyses the reaction Endonucleolytic cleavage to 5'-phosphomonoester.. Its function is as follows. Endonuclease that specifically degrades the RNA of RNA-DNA hybrids. This chain is Ribonuclease HII, found in Methanococcus maripaludis (strain C6 / ATCC BAA-1332).